The sequence spans 476 residues: Cytosolic iron-sulfur assembly component 3 (476 aa).

Ala-2 is modified (N-acetylalanine). Residues Cys-24, Cys-71, Cys-74, Cys-77, Cys-190, and Cys-246 each coordinate [4Fe-4S] cluster. Positions 297–316 are disordered; the sequence is DGLTSSVSAEEPSSHRGGGS. 2 residues coordinate [4Fe-4S] cluster: Cys-395 and Cys-399.

The protein belongs to the NARF family. In terms of assembly, external component of the CIA complex. In the CIA complex, interacts directly with CIAO1 and MMS19.

Its function is as follows. Component of the cytosolic iron-sulfur protein assembly (CIA) complex, a multiprotein complex that mediates the incorporation of iron-sulfur cluster into extramitochondrial Fe/S proteins. Seems to negatively regulate the level of HIF1A expression, although this effect could be indirect. The protein is Cytosolic iron-sulfur assembly component 3 (Ciao3) of Mus musculus (Mouse).